The chain runs to 346 residues: Cyclin-dependent kinase 20 (346 aa).

Residues 4-288 (YCILGRIGEG…ASQALLHQYF (285 aa)) form the Protein kinase domain. ATP is bound by residues 10–18 (IGEGAHGIV) and Lys-33. The active-site Proton acceptor is the Asp-127. A disordered region spans residues 298–324 (SELPIPQRPGGPAPKAHPGPPHVHDFH). The span at 303–318 (PQRPGGPAPKAHPGPP) shows a compositional bias: pro residues.

It belongs to the protein kinase superfamily. CMGC Ser/Thr protein kinase family. CDC2/CDKX subfamily. Monomer. Interacts with MAK. Interacts with TBC1D32.

The protein localises to the nucleus. It is found in the cytoplasm. Its subcellular location is the cell projection. It localises to the cilium. It carries out the reaction L-seryl-[protein] + ATP = O-phospho-L-seryl-[protein] + ADP + H(+). The catalysed reaction is L-threonyl-[protein] + ATP = O-phospho-L-threonyl-[protein] + ADP + H(+). In terms of biological role, involved in cell growth. Activates CDK2, a kinase involved in the control of the cell cycle, by phosphorylating residue 'Thr-160'. Required for high-level Shh responses in the developing neural tube. Together with TBC1D32, controls the structure of the primary cilium by coordinating assembly of the ciliary membrane and axoneme, allowing GLI2 to be properly activated in response to SHH signaling. The sequence is that of Cyclin-dependent kinase 20 (Cdk20) from Mus musculus (Mouse).